Reading from the N-terminus, the 421-residue chain is Serine--tRNA ligase (421 aa).

229-231 lines the L-serine pocket; it reads TAE. 260-262 is an ATP binding site; the sequence is RAE. Residue Glu283 participates in L-serine binding. 347 to 350 contributes to the ATP binding site; it reads EISS. Ser383 is an L-serine binding site.

This sequence belongs to the class-II aminoacyl-tRNA synthetase family. Type-1 seryl-tRNA synthetase subfamily. Homodimer. The tRNA molecule binds across the dimer.

Its subcellular location is the cytoplasm. It carries out the reaction tRNA(Ser) + L-serine + ATP = L-seryl-tRNA(Ser) + AMP + diphosphate + H(+). The enzyme catalyses tRNA(Sec) + L-serine + ATP = L-seryl-tRNA(Sec) + AMP + diphosphate + H(+). Its pathway is aminoacyl-tRNA biosynthesis; selenocysteinyl-tRNA(Sec) biosynthesis; L-seryl-tRNA(Sec) from L-serine and tRNA(Sec): step 1/1. Catalyzes the attachment of serine to tRNA(Ser). Is also able to aminoacylate tRNA(Sec) with serine, to form the misacylated tRNA L-seryl-tRNA(Sec), which will be further converted into selenocysteinyl-tRNA(Sec). The sequence is that of Serine--tRNA ligase from Desulfitobacterium hafniense (strain DSM 10664 / DCB-2).